We begin with the raw amino-acid sequence, 527 residues long: 4-alpha-glucanotransferase (527 aa).

The protein belongs to the disproportionating enzyme family.

Its subcellular location is the cytoplasm. It catalyses the reaction Transfers a segment of a (1-&gt;4)-alpha-D-glucan to a new position in an acceptor, which may be glucose or a (1-&gt;4)-alpha-D-glucan.. The chain is 4-alpha-glucanotransferase (malQ) from Chlamydia muridarum (strain MoPn / Nigg).